A 270-amino-acid polypeptide reads, in one-letter code: 5'-AMP-activated protein kinase subunit beta-1 (270 aa).

The tract at residues 1 to 44 is disordered; that stretch reads MGNTSSERAALERQAGHKTPRRDSSGGAKDGDRPKILMDSPEDA. Residue Gly-2 is the site of N-myristoyl glycine attachment. A Phosphothreonine modification is found at Thr-4. 2 positions are modified to phosphoserine: Ser-5 and Ser-6. Residues 9–36 are compositionally biased toward basic and acidic residues; that stretch reads AALERQAGHKTPRRDSSGGAKDGDRPKI. Position 19 is a phosphothreonine (Thr-19). Ser-24 and Ser-25 each carry phosphoserine; by autocatalysis. 3 positions are modified to phosphoserine: Ser-40, Ser-96, and Ser-101. A glycogen-binding domain region spans residues 68-163; that stretch reads EANDKAPAQA…QVKKTDFEVF (96 aa). Ser-108 is modified (phosphoserine; by autocatalysis). Thr-148 is subject to Phosphothreonine. A Phosphoserine modification is found at Ser-182. Lys-201 is subject to N6-succinyllysine.

The protein belongs to the 5'-AMP-activated protein kinase beta subunit family. AMPK is a heterotrimer of an alpha catalytic subunit (PRKAA1 or PRKAA2), a beta (PRKAB1 or PRKAB2) and a gamma non-catalytic subunits (PRKAG1, PRKAG2 or PRKAG3). Interacts with FNIP1 and FNIP2. In terms of processing, phosphorylated when associated with the catalytic subunit (PRKAA1 or PRKAA2). Phosphorylated by ULK1; leading to negatively regulate AMPK activity and suggesting the existence of a regulatory feedback loop between ULK1 and AMPK.

Non-catalytic subunit of AMP-activated protein kinase (AMPK), an energy sensor protein kinase that plays a key role in regulating cellular energy metabolism. In response to reduction of intracellular ATP levels, AMPK activates energy-producing pathways and inhibits energy-consuming processes: inhibits protein, carbohydrate and lipid biosynthesis, as well as cell growth and proliferation. AMPK acts via direct phosphorylation of metabolic enzymes, and by longer-term effects via phosphorylation of transcription regulators. Also acts as a regulator of cellular polarity by remodeling the actin cytoskeleton; probably by indirectly activating myosin. Beta non-catalytic subunit acts as a scaffold on which the AMPK complex assembles, via its C-terminus that bridges alpha (PRKAA1 or PRKAA2) and gamma subunits (PRKAG1, PRKAG2 or PRKAG3). The protein is 5'-AMP-activated protein kinase subunit beta-1 (Prkab1) of Mus musculus (Mouse).